The chain runs to 143 residues: MLENKMELKFLAKSENESFARVTVASFASELDPTLEEIDDVKMAVSEAVTNAIIHGYENKGGVVTICAVIEDRELTIEVMDEGIGIENIEKAMEPLYTSRPDLERSGMGFTVMESFMDNIKVESEKGKGTKIIMKKKFALIED.

This sequence belongs to the anti-sigma-factor family.

The catalysed reaction is L-seryl-[protein] + ATP = O-phospho-L-seryl-[protein] + ADP + H(+). It catalyses the reaction L-threonyl-[protein] + ATP = O-phospho-L-threonyl-[protein] + ADP + H(+). In terms of biological role, binds to sigma F and blocks its ability to form an RNA polymerase holoenzyme (E-sigma F). Phosphorylates SpoIIAA on a serine residue. This phosphorylation may enable SpoIIAA to act as an anti-anti-sigma factor that counteracts SpoIIAB and thus releases sigma F from inhibition. This Clostridium acetobutylicum (strain ATCC 824 / DSM 792 / JCM 1419 / IAM 19013 / LMG 5710 / NBRC 13948 / NRRL B-527 / VKM B-1787 / 2291 / W) protein is Anti-sigma F factor.